Reading from the N-terminus, the 388-residue chain is Carbohydrate sulfotransferase 4 (388 aa).

The Cytoplasmic portion of the chain corresponds to M1–G7. Residues R8 to V28 traverse the membrane as a helical; Signal-anchor for type II membrane protein segment. Residues H29 to G388 lie on the Lumenal side of the membrane. 3'-phosphoadenylyl sulfate is bound by residues W50 to F56 and R204 to S212. N-linked (GlcNAc...) asparagine glycosylation is found at N307, N328, and N369.

The protein belongs to the sulfotransferase 1 family. Gal/GlcNAc/GalNAc subfamily. As to quaternary structure, monomer. In terms of tissue distribution, specifically expressed in high endothelial venules (HEV) of peripheral lymph nodes.

The protein localises to the golgi apparatus membrane. It catalyses the reaction 3-O-{N-acetyl-beta-D-glucosaminyl-(1-&gt;3)-beta-D-galactosyl-(1-&gt;3)-N-acetyl-alpha-D-galactosaminyl}-L-threonyl-[protein] + 3'-phosphoadenylyl sulfate = 3-O-{6-O-sulfo-N-acetyl-beta-D-glucosaminyl-(1-&gt;3)-beta-D-galactosyl-(1-&gt;3)-N-acetyl-alpha-D-galactosaminyl}-L-threonyl-[protein] + adenosine 3',5'-bisphosphate + H(+). The enzyme catalyses 3-O-{N-acetyl-beta-D-glucosaminyl-(1-&gt;3)-beta-D-galactosyl-(1-&gt;3)-N-acetyl-alpha-D-galactosaminyl}-L-seryl-[protein] + 3'-phosphoadenylyl sulfate = 3-O-{6-O-sulfo-N-acetyl-beta-D-glucosaminyl-(1-&gt;3)-beta-D-galactosyl-(1-&gt;3)-N-acetyl-alpha-D-galactosaminyl}-L-seryl-[protein] + adenosine 3',5'-bisphosphate + H(+). The catalysed reaction is a 3-O-{beta-D-galactosyl-(1-&gt;3)-[N-acetyl-beta-D-glucosaminyl-(1-&gt;6)]-N-acetyl-alpha-D-galactosaminyl}-L-threonyl-[protein] + 3'-phosphoadenylyl sulfate = 3-O-{beta-D-galactosyl-(1-&gt;3)-[6-O-sulfo-N-acetyl-beta-D-glucosaminyl-(1-&gt;6)]-N-acetyl-alpha-D-galactosaminyl}-L-threonyl-[protein] + adenosine 3',5'-bisphosphate + H(+). It carries out the reaction 3-O-{beta-D-galactosyl-(1-&gt;3)-[N-acetyl-beta-D-glucosaminyl-(1-&gt;6)]-N-acetyl-alpha-D-galactosaminyl}-L-seryl-[protein] + 3'-phosphoadenylyl sulfate = 3-O-{beta-D-galactosyl-(1-&gt;3)-[6-O-sulfo-N-acetyl-beta-D-glucosaminyl-(1-&gt;6)]-N-acetyl-alpha-D-galactosaminyl}-L-seryl-[protein] + adenosine 3',5'-bisphosphate + H(+). It functions in the pathway protein modification; carbohydrate sulfation. In terms of biological role, sulfotransferase involved in SELL/L-selectin ligand biosynthesis pathway. Catalyzes the transfer of the sulfate group from 3'-phospho-5'-adenylyl sulfate (PAPS) onto the hydroxyl group at C-6 position of the non-reducing N-acetylglucosamine (GlcNAc) residue within O-linked mucin-type glycans. Contributes to generate sialyl 6-sulfo Lewis X determinant (also known as MECA-79 epitope) for SELL recognition, a prerequisite for continuous lymphocyte homing into peripheral lymph nodes and antigen immune surveillance. Transfers the sulfate group primarily on core 2 GlcNAcbeta1-6(Galbeta1-3)GalNAcalphaSer/Thr and extended core 1 GlcNAcbeta1-3Galbeta1-3GalNAcalphaSer/Thr based O-linked glycans on CD34 and GLYCAM1 peripheral node addressins (PNAds) expressed on the lumenal side of high endothelial venules (HEVs). The recognition of PNAds by SELL initiates a multistep process comprising tethering and rolling of blood lymphocytes on HEVs against the blood flow, followed by chemokine signaling, integrin-mediated lymphocyte adhesion onto endothelial cells and lymphocyte transendothelial migration. Modulates rolling velocity and differential T and B lymphocyte recruitment into peripheral lymph nodes, with a major role in B lymphocyte homing. Might be redundant in sulfation of MADCAM1 and lymphocyte trafficking to mesenteric lymph nodes. Can also sulfonate core 3 GlcNAcbeta1-3GalNAc-R based glycans as well as GlcNAcbeta1-3Galbeta1-Glc, GlcNAcbeta1-6ManOMe and GlcNAcbeta1-2Man oligosaccharides, which might be ectopically expressed during tumorigenesis. This Mus musculus (Mouse) protein is Carbohydrate sulfotransferase 4 (Chst4).